A 595-amino-acid polypeptide reads, in one-letter code: MRETLEALSSLGFSVGQPEMAPQSEPREGSHNAQEQMSSSREERALGVCSGHEAPTPEEGAHTEQAEAPCRGQACSAQKAQPVGTCPGEEWMIRKVKVEDEDQEAEEEVEWPQHLSLLPSPFPAPDLGHLAAAYKLEPGAPGALSGLALSGWGPMPEKPYGCGECERRFRDQLTLRLHQRLHRGEGPCACPDCGRSFTQRAHMLLHQRSHRGERPFPCSECDKRFSKKAHLTRHLRTHTGERPYPCAECGKRFSQKIHLGSHQKTHTGERPFPCTECEKRFRKKTHLIRHQRIHTGERPYQCAQCARSFTHKQHLVRHQRVHQTAGPARPSPDSSASPHSTAPSPTPSFPGPKPFACSDCGLSFGWKKNLATHQCLHRSEGRPFGCDECALGATVDAPAAKPLASAPGGPGCGPGSDPVVPQRAPSGERSFFCPDCGRGFSHGQHLARHPRVHTGERPFACTQCDRRFGSRPNLVAHSRAHSGARPFACAQCGRRFSRKSHLGRHQAVHTGSRPHACAVCARSFSSKTNLVRHQAIHTGSRPFSCPQCGKSFSRKTHLVRHQLIHGEAAHAAPDAALAAPAWSAPPEVAPPPLFF.

The interval 1 to 67 is disordered; the sequence is MRETLEALSS…EEGAHTEQAE (67 aa). A Glycyl lysine isopeptide (Lys-Gly) (interchain with G-Cter in SUMO2) cross-link involves residue K97. C2H2-type zinc fingers lie at residues 160 to 182, 188 to 210, 216 to 238, 244 to 266, 272 to 294, and 300 to 322; these read YGCGECERRFRDQLTLRLHQRLH, CACPDCGRSFTQRAHMLLHQRSH, FPCSECDKRFSKKAHLTRHLRTH, YPCAECGKRFSQKIHLGSHQKTH, FPCTECEKRFRKKTHLIRHQRIH, and YQCAQCARSFTHKQHLVRHQRVH. Residues 313-350 are disordered; sequence QHLVRHQRVHQTAGPARPSPDSSASPHSTAPSPTPSFP. Low complexity predominate over residues 325–343; it reads AGPARPSPDSSASPHSTAP. 6 consecutive C2H2-type zinc fingers follow at residues 355–377, 431–453, 459–481, 487–509, 515–537, and 543–565; these read FACSDCGLSFGWKKNLATHQCLH, FFCPDCGRGFSHGQHLARHPRVH, FACTQCDRRFGSRPNLVAHSRAH, FACAQCGRRFSRKSHLGRHQAVH, HACAVCARSFSSKTNLVRHQAIH, and FSCPQCGKSFSRKTHLVRHQLIH. A Glycyl lysine isopeptide (Lys-Gly) (interchain with G-Cter in SUMO2) cross-link involves residue K368.

The protein belongs to the krueppel C2H2-type zinc-finger protein family. As to quaternary structure, interacts with STAT3. Enhances STAT3 activity by keeping it in the nucleus.

It is found in the nucleus. Its function is as follows. Transcription factor that promotes adipocyte differentiation and suppresses osteoblast differentiation in the bone marrow. Enhances the osteoclast-supporting ability of stromal cells. Binds with STAT3 the consensus sequence 5'-CTTCTGGGAAGA-3' of the acute phase response element (APRE). Transactivates several promoters including FOS, OSM and PPARG. Recruits a histone deacetylase complex. This is Zinc finger protein 467 (ZNF467) from Homo sapiens (Human).